Reading from the N-terminus, the 225-residue chain is Ring protein 2 (225 aa).

The segment at 206-225 (PEYSPKDEDNNAKDDLPDAR) is disordered.

Homododecamer.

The protein localises to the virion. Its function is as follows. Forms the tail multi-ring barrel with ring protein 1, ring protein 3 and ring protein 4. The protein is Ring protein 2 of Bacteroides intestinalis (Bacteroides phage PhiCrAss001).